The sequence spans 72 residues: Large ribosomal subunit protein bL32 (72 aa).

It belongs to the bacterial ribosomal protein bL32 family.

In Dehalococcoides mccartyi (strain ATCC BAA-2100 / JCM 16839 / KCTC 5957 / BAV1), this protein is Large ribosomal subunit protein bL32.